A 1103-amino-acid polypeptide reads, in one-letter code: Isoleucine--tRNA ligase (1103 aa).

A 'HIGH' region motif is present at residues Pro53–His63. The 'KMSKS' region motif lies at Lys628 to Arg632. Lys631 serves as a coordination point for ATP.

This sequence belongs to the class-I aminoacyl-tRNA synthetase family. IleS type 2 subfamily. In terms of assembly, monomer. It depends on Zn(2+) as a cofactor.

The protein localises to the cytoplasm. It catalyses the reaction tRNA(Ile) + L-isoleucine + ATP = L-isoleucyl-tRNA(Ile) + AMP + diphosphate. In terms of biological role, catalyzes the attachment of isoleucine to tRNA(Ile). As IleRS can inadvertently accommodate and process structurally similar amino acids such as valine, to avoid such errors it has two additional distinct tRNA(Ile)-dependent editing activities. One activity is designated as 'pretransfer' editing and involves the hydrolysis of activated Val-AMP. The other activity is designated 'posttransfer' editing and involves deacylation of mischarged Val-tRNA(Ile). In Rickettsia akari (strain Hartford), this protein is Isoleucine--tRNA ligase.